The primary structure comprises 123 residues: Small ribosomal subunit protein uS12c (123 aa).

This sequence belongs to the universal ribosomal protein uS12 family. Part of the 30S ribosomal subunit.

It is found in the plastid. The protein localises to the chloroplast. Its function is as follows. With S4 and S5 plays an important role in translational accuracy. Located at the interface of the 30S and 50S subunits. In Huperzia lucidula (Shining clubmoss), this protein is Small ribosomal subunit protein uS12c (rps12).